Reading from the N-terminus, the 1054-residue chain is Bifunctional glutamine synthetase adenylyltransferase/adenylyl-removing enzyme (1054 aa).

The interval Met-1–Leu-535 is adenylyl removase. 2 stretches are compositionally biased toward polar residues: residues Ser-138–Asp-150 and Asp-165–Gly-175. The segment at Ser-138–Gly-175 is disordered. The interval Asn-541–Tyr-1054 is adenylyl transferase.

It belongs to the GlnE family. The cofactor is Mg(2+).

The catalysed reaction is [glutamine synthetase]-O(4)-(5'-adenylyl)-L-tyrosine + phosphate = [glutamine synthetase]-L-tyrosine + ADP. The enzyme catalyses [glutamine synthetase]-L-tyrosine + ATP = [glutamine synthetase]-O(4)-(5'-adenylyl)-L-tyrosine + diphosphate. Its function is as follows. Involved in the regulation of glutamine synthetase GlnA, a key enzyme in the process to assimilate ammonia. When cellular nitrogen levels are high, the C-terminal adenylyl transferase (AT) inactivates GlnA by covalent transfer of an adenylyl group from ATP to specific tyrosine residue of GlnA, thus reducing its activity. Conversely, when nitrogen levels are low, the N-terminal adenylyl removase (AR) activates GlnA by removing the adenylyl group by phosphorolysis, increasing its activity. The regulatory region of GlnE binds the signal transduction protein PII (GlnB) which indicates the nitrogen status of the cell. The polypeptide is Bifunctional glutamine synthetase adenylyltransferase/adenylyl-removing enzyme (Corynebacterium diphtheriae (strain ATCC 700971 / NCTC 13129 / Biotype gravis)).